We begin with the raw amino-acid sequence, 197 residues long: Phosphoheptose isomerase (197 aa).

The SIS domain occupies methionine 36 to glutamate 197. Asparagine 51–glycine 53 contacts substrate. 2 residues coordinate Zn(2+): histidine 60 and glutamate 64. Substrate contacts are provided by residues glutamate 64, asparagine 93–aspartate 94, serine 119–serine 121, serine 124, and glutamine 174. The Zn(2+) site is built by glutamine 174 and histidine 182.

The protein belongs to the SIS family. GmhA subfamily. In terms of assembly, homotetramer. The cofactor is Zn(2+).

It is found in the cytoplasm. It carries out the reaction 2 D-sedoheptulose 7-phosphate = D-glycero-alpha-D-manno-heptose 7-phosphate + D-glycero-beta-D-manno-heptose 7-phosphate. Its pathway is carbohydrate biosynthesis; D-glycero-D-manno-heptose 7-phosphate biosynthesis; D-glycero-alpha-D-manno-heptose 7-phosphate and D-glycero-beta-D-manno-heptose 7-phosphate from sedoheptulose 7-phosphate: step 1/1. Functionally, catalyzes the isomerization of sedoheptulose 7-phosphate in D-glycero-D-manno-heptose 7-phosphate. The sequence is that of Phosphoheptose isomerase from Pseudomonas aeruginosa (strain LESB58).